A 79-amino-acid polypeptide reads, in one-letter code: Sec-independent protein translocase protein TatA (79 aa).

A helical transmembrane segment spans residues 1-21 (MGGFTSIWHWVIVLLVIVLLF). Positions 48–79 (EEEAKNEPKTLDAQVTQAKVHESSEIKNKQEG) are disordered. Over residues 66-79 (KVHESSEIKNKQEG) the composition is skewed to basic and acidic residues.

It belongs to the TatA/E family. The Tat system comprises two distinct complexes: a TatABC complex, containing multiple copies of TatA, TatB and TatC subunits, and a separate TatA complex, containing only TatA subunits. Substrates initially bind to the TatABC complex, which probably triggers association of the separate TatA complex to form the active translocon.

It localises to the cell inner membrane. Functionally, part of the twin-arginine translocation (Tat) system that transports large folded proteins containing a characteristic twin-arginine motif in their signal peptide across membranes. TatA could form the protein-conducting channel of the Tat system. The polypeptide is Sec-independent protein translocase protein TatA (Helicobacter acinonychis (strain Sheeba)).